A 183-amino-acid polypeptide reads, in one-letter code: Holliday junction branch migration complex subunit RuvA (183 aa).

Residues 1 to 63 (MIVGLIGVVE…EDAHLLYGFL (63 aa)) are domain I. The tract at residues 64–139 (EEGEKILFER…FFIQDENRPA (76 aa)) is domain II. A region of interest (flexible linker) is located at residue A139. Positions 139-183 (ARNEVFLALESLGFKSAEINQVLKTLKPNLSIEAAIKEALQQLRS) are domain III.

This sequence belongs to the RuvA family. Homotetramer. Forms an RuvA(8)-RuvB(12)-Holliday junction (HJ) complex. HJ DNA is sandwiched between 2 RuvA tetramers; dsDNA enters through RuvA and exits via RuvB. An RuvB hexamer assembles on each DNA strand where it exits the tetramer. Each RuvB hexamer is contacted by two RuvA subunits (via domain III) on 2 adjacent RuvB subunits; this complex drives branch migration. In the full resolvosome a probable DNA-RuvA(4)-RuvB(12)-RuvC(2) complex forms which resolves the HJ.

It is found in the cytoplasm. Its function is as follows. The RuvA-RuvB-RuvC complex processes Holliday junction (HJ) DNA during genetic recombination and DNA repair, while the RuvA-RuvB complex plays an important role in the rescue of blocked DNA replication forks via replication fork reversal (RFR). RuvA specifically binds to HJ cruciform DNA, conferring on it an open structure. The RuvB hexamer acts as an ATP-dependent pump, pulling dsDNA into and through the RuvAB complex. HJ branch migration allows RuvC to scan DNA until it finds its consensus sequence, where it cleaves and resolves the cruciform DNA. The protein is Holliday junction branch migration complex subunit RuvA of Helicobacter pylori (strain ATCC 700392 / 26695) (Campylobacter pylori).